Here is a 2430-residue protein sequence, read N- to C-terminus: Protein TASOR 2 (2430 aa).

3 positions are modified to phosphoserine: Ser-19, Ser-219, and Ser-384. Disordered regions lie at residues 416-488 and 577-648; these read LDRK…GETA and RGTS…SQSS. Position 685 is a phosphoserine (Ser-685). A disordered region spans residues 704–727; the sequence is LLLQQKPPDDPVVKPKDRPPSARV. Over residues 710–723 the composition is skewed to basic and acidic residues; sequence PPDDPVVKPKDRPP. A phosphoserine mark is found at Ser-1025, Ser-1087, and Ser-1172. The disordered stretch occupies residues 1331–1360; that stretch reads LTESREVSSADNVSVYPSVSEEPVENKERK. Ser-1541 carries the post-translational modification Phosphoserine. Positions 1700–1727 are disordered; it reads EAELHKETTGPGTAGPQSNTTSSLKGER. Residues 1714-1723 are compositionally biased toward polar residues; it reads GPQSNTTSSL. Ser-1848 carries the phosphoserine modification. Lys-2007 is covalently cross-linked (Glycyl lysine isopeptide (Lys-Gly) (interchain with G-Cter in SUMO2)). 4 positions are modified to phosphoserine: Ser-2009, Ser-2037, Ser-2062, and Ser-2066. The tract at residues 2046–2069 is disordered; it reads SDPRPQGQPRRGYTASSLDSSSSW.

This sequence belongs to the TASOR family.

The sequence is that of Protein TASOR 2 from Homo sapiens (Human).